The primary structure comprises 249 residues: Triosephosphate isomerase (249 aa).

9–11 (NWK) contacts substrate. The Electrophile role is filled by His91. The Proton acceptor role is filled by Glu163. Residues Gly169, Ser209, and 230–231 (GG) contribute to the substrate site.

Belongs to the triosephosphate isomerase family. As to quaternary structure, homodimer.

It is found in the cytoplasm. It carries out the reaction D-glyceraldehyde 3-phosphate = dihydroxyacetone phosphate. It functions in the pathway carbohydrate biosynthesis; gluconeogenesis. It participates in carbohydrate degradation; glycolysis; D-glyceraldehyde 3-phosphate from glycerone phosphate: step 1/1. Functionally, involved in the gluconeogenesis. Catalyzes stereospecifically the conversion of dihydroxyacetone phosphate (DHAP) to D-glyceraldehyde-3-phosphate (G3P). The protein is Triosephosphate isomerase of Halorhodospira halophila (strain DSM 244 / SL1) (Ectothiorhodospira halophila (strain DSM 244 / SL1)).